Here is a 536-residue protein sequence, read N- to C-terminus: 3',5'-cyclic-AMP phosphodiesterase 4C (536 aa).

Positions Gln49–Gly69 are disordered. One can recognise a PDEase domain in the interval Val178–Ser507. His254 acts as the Proton donor in catalysis. Position 254 (His254) interacts with 3',5'-cyclic AMP. AMP is bound by residues His254 and His258. Residues His258, His294, Asp295, and Asp412 each coordinate Zn(2+). Positions 295, 412, 463, and 466 each coordinate AMP. Asp295 lines the Mg(2+) pocket. Mn(2+) is bound at residue Asp295. Residues Gln463 and Phe466 each contribute to the 3',5'-cyclic AMP site. Phosphoserine is present on Ser507.

It belongs to the cyclic nucleotide phosphodiesterase family. PDE4 subfamily. As to quaternary structure, part of a complex containing AKAP5, ADCY5, ADCY6 and PKD2. Zn(2+) serves as cofactor. It depends on Mg(2+) as a cofactor. Mn(2+) is required as a cofactor.

Its subcellular location is the cell projection. The protein localises to the cilium. It carries out the reaction 3',5'-cyclic AMP + H2O = AMP + H(+). Its pathway is purine metabolism; 3',5'-cyclic AMP degradation; AMP from 3',5'-cyclic AMP: step 1/1. In terms of biological role, hydrolyzes the second messenger cAMP, which is a key regulator of many important physiological processes. This chain is 3',5'-cyclic-AMP phosphodiesterase 4C, found in Rattus norvegicus (Rat).